Reading from the N-terminus, the 224-residue chain is Ribonuclease T (224 aa).

Residues 32 to 206 (VVVDVETGGF…YDTEKTAELF (175 aa)) enclose the Exonuclease domain. 4 residues coordinate Mg(2+): Asp-35, Glu-37, His-193, and Asp-198. The active-site Proton donor/acceptor is His-193.

This sequence belongs to the RNase T family. Homodimer. It depends on Mg(2+) as a cofactor.

Functionally, trims short 3' overhangs of a variety of RNA species, leaving a one or two nucleotide 3' overhang. Responsible for the end-turnover of tRNA: specifically removes the terminal AMP residue from uncharged tRNA (tRNA-C-C-A). Also appears to be involved in tRNA biosynthesis. The sequence is that of Ribonuclease T from Pseudomonas paraeruginosa (strain DSM 24068 / PA7) (Pseudomonas aeruginosa (strain PA7)).